Reading from the N-terminus, the 93-residue chain is Protein VNG_0358C (93 aa).

The chain is Protein VNG_0358C from Halobacterium salinarum (strain ATCC 700922 / JCM 11081 / NRC-1) (Halobacterium halobium).